Reading from the N-terminus, the 138-residue chain is Cysteine desulfuration protein SufE (138 aa).

The Cysteine persulfide intermediate role is filled by cysteine 51.

It belongs to the SufE family. As to quaternary structure, homodimer. Interacts with SufS.

It localises to the cytoplasm. It participates in cofactor biosynthesis; iron-sulfur cluster biosynthesis. Its function is as follows. Participates in cysteine desulfuration mediated by SufS. Cysteine desulfuration mobilizes sulfur from L-cysteine to yield L-alanine and constitutes an essential step in sulfur metabolism for biosynthesis of a variety of sulfur-containing biomolecules. Functions as a sulfur acceptor for SufS, by mediating the direct transfer of the sulfur atom from the S-sulfanylcysteine of SufS, an intermediate product of cysteine desulfuration process. The polypeptide is Cysteine desulfuration protein SufE (Sodalis glossinidius (strain morsitans)).